Reading from the N-terminus, the 360-residue chain is Carbamoyl phosphate synthase small chain (360 aa).

Residues 1–169 form a CPSase region; that stretch reads MTKRLLILED…TKTAYPAPGI (169 aa). L-glutamine-binding residues include Ser-46, Gly-220, and Gly-222. One can recognise a Glutamine amidotransferase type-1 domain in the interval 172 to 358; sequence NIVLVDFGLK…LEMIDSWRCT (187 aa). Cys-247 serves as the catalytic Nucleophile. Residues Met-248, Gln-251, Asn-289, Gly-291, and Tyr-292 each coordinate L-glutamine. Residues His-331 and Asp-333 contribute to the active site.

This sequence belongs to the CarA family. As to quaternary structure, composed of two chains; the small (or glutamine) chain promotes the hydrolysis of glutamine to ammonia, which is used by the large (or ammonia) chain to synthesize carbamoyl phosphate. Tetramer of heterodimers (alpha,beta)4.

The enzyme catalyses hydrogencarbonate + L-glutamine + 2 ATP + H2O = carbamoyl phosphate + L-glutamate + 2 ADP + phosphate + 2 H(+). It carries out the reaction L-glutamine + H2O = L-glutamate + NH4(+). Its pathway is amino-acid biosynthesis; L-arginine biosynthesis; carbamoyl phosphate from bicarbonate: step 1/1. It participates in pyrimidine metabolism; UMP biosynthesis via de novo pathway; (S)-dihydroorotate from bicarbonate: step 1/3. Its function is as follows. Small subunit of the glutamine-dependent carbamoyl phosphate synthetase (CPSase). CPSase catalyzes the formation of carbamoyl phosphate from the ammonia moiety of glutamine, carbonate, and phosphate donated by ATP, constituting the first step of 2 biosynthetic pathways, one leading to arginine and/or urea and the other to pyrimidine nucleotides. The small subunit (glutamine amidotransferase) binds and cleaves glutamine to supply the large subunit with the substrate ammonia. The polypeptide is Carbamoyl phosphate synthase small chain (Streptococcus pyogenes serotype M18 (strain MGAS8232)).